A 62-amino-acid chain; its full sequence is Photosystem II reaction center protein Z (62 aa).

2 helical membrane-spanning segments follow: residues 8 to 28 (LVLLLITLSTILVVGVPVVLA) and 41 to 61 (YTGAGLWTGLVIVTSLVNSLV).

It belongs to the PsbZ family. PSII is composed of 1 copy each of membrane proteins PsbA, PsbB, PsbC, PsbD, PsbE, PsbF, PsbH, PsbI, PsbJ, PsbK, PsbL, PsbM, PsbT, PsbX, PsbY, PsbZ, Psb30/Ycf12, at least 3 peripheral proteins of the oxygen-evolving complex and a large number of cofactors. It forms dimeric complexes.

It is found in the plastid. The protein resides in the chloroplast thylakoid membrane. In terms of biological role, may control the interaction of photosystem II (PSII) cores with the light-harvesting antenna, regulates electron flow through the 2 photosystem reaction centers. PSII is a light-driven water plastoquinone oxidoreductase, using light energy to abstract electrons from H(2)O, generating a proton gradient subsequently used for ATP formation. This is Photosystem II reaction center protein Z from Porphyra purpurea (Red seaweed).